The primary structure comprises 95 residues: Integration host factor subunit alpha (95 aa).

A disordered region spans residues 51–71 (NFDLRDKNERPGRNPKTGEDI). Positions 53-69 (DLRDKNERPGRNPKTGE) are enriched in basic and acidic residues.

It belongs to the bacterial histone-like protein family. As to quaternary structure, heterodimer of an alpha and a beta chain.

In terms of biological role, this protein is one of the two subunits of integration host factor, a specific DNA-binding protein that functions in genetic recombination as well as in transcriptional and translational control. This Vibrio vulnificus (strain CMCP6) protein is Integration host factor subunit alpha.